The following is a 508-amino-acid chain: Erythropoietin receptor (508 aa).

The first 24 residues, 1–24, serve as a signal peptide directing secretion; that stretch reads MNHLWTHLWPGVGSLCLLLAGAAW. The Extracellular segment spans residues 25–250; sequence ASLPKPLDPK…SLLTASDLDP (226 aa). A disulfide bond links C52 and C62. N76 carries an N-linked (GlcNAc...) asparagine glycan. C91 and C107 are disulfide-bonded. A Fibronectin type-III domain is found at 148-247; it reads PPAGLLARRA…EPASLLTASD (100 aa). N-linked (GlcNAc...) asparagine glycosylation occurs at N184. The WSXWS motif motif lies at 233–237; sequence WSAWS. The chain crosses the membrane as a helical span at residues 251–273; sequence LILTLSLILVLILLLLAVLALLS. Topologically, residues 274–508 are cytoplasmic; the sequence is HRRTLKQKIW…PSPPGYVACS (235 aa). K281 participates in a covalent cross-link: Glycyl lysine isopeptide (Lys-Gly) (interchain with G-Cter in ubiquitin). The Box 1 motif signature appears at 282–290; that stretch reads IWPGIPSPE. Phosphotyrosine; by JAK2 is present on residues Y368 and Y426. The ITIM motif motif lies at 452–457; that stretch reads IKYLYL. A Glycyl lysine isopeptide (Lys-Gly) (interchain with G-Cter in ubiquitin) cross-link involves residue K453. Residues Y454, Y456, Y468, Y489, and Y504 each carry the phosphotyrosine; by JAK2 modification. The segment at 467–508 is disordered; the sequence is DYSSGGSQGAQGDSLNSPFLNPYENSLIPAPEPSPPGYVACS.

It belongs to the type I cytokine receptor family. Type 1 subfamily. Forms homodimers on EPO stimulation. The tyrosine-phosphorylated form interacts with several SH2 domain-containing proteins including LYN, the adapter protein SH2B2, PTPN6, PTPN11, JAK2, PI3 kinases, STAT5A/B, SOCS3, CRKL. Interacts with INPP5D/SHIP1. SH2B2 binding inhibits the JAK-STAT signaling. Interacts with RHEX; this interaction occurs in a erythropoietin (EPO)-dependent manner. Interacts with ATXN2L. On EPO stimulation, phosphorylated on C-terminal tyrosine residues by JAK2. The phosphotyrosine motifs are also recruitment sites for several SH2-containing proteins and adapter proteins which mediate cell proliferation. Phosphorylation on Tyr-454 is required for PTPN6 interaction, Tyr-426 for PTPN11. Tyr-426 is also required for SOCS3 binding, but Tyr-454/Tyr-456 motif is the preferred binding site. Post-translationally, ubiquitinated by the ECS(SOCS2) complex following ligand-binding and phosphorylation by JAK2, leading to its degradation by the proteasome. Regulation by the ECS(SOCS2) complex acts as a negative feedback loop of erythropoietin-mediated signaling pathway. Ubiquitination at Lys-281 mediates receptor internalization, whereas ubiquitination at Lys-453 promotes trafficking of activated receptors to the lysosomes for degradation. Ubiquitinated by NOSIP; appears to be either multi-monoubiquitinated or polyubiquitinated. Ubiquitination mediates proliferation and survival of EPO-dependent cells.

It is found in the cell membrane. Functionally, receptor for erythropoietin, which mediates erythropoietin-induced erythroblast proliferation and differentiation. Upon EPO stimulation, EPOR dimerizes triggering the JAK2/STAT5 signaling cascade. In some cell types, can also activate STAT1 and STAT3. May also activate the LYN tyrosine kinase. Its function is as follows. Isoform EPOR-T acts as a dominant-negative receptor of EPOR-mediated signaling. The sequence is that of Erythropoietin receptor (EPOR) from Canis lupus familiaris (Dog).